Reading from the N-terminus, the 129-residue chain is MRNDTLNDVINSIKNASRLGRREIIAEPAAKLIGKVLKVMQDYNYIKSFEVIDESRGGKFKIVLNTTINNCGVIKPRFPVKNENLEKYESRYLPAEDFGILILTTTKGVMSNIEARKLGIGGKLLAYVY.

Belongs to the universal ribosomal protein uS8 family. In terms of assembly, part of the 30S ribosomal subunit.

In terms of biological role, one of the primary rRNA binding proteins, it binds directly to 16S rRNA central domain where it helps coordinate assembly of the platform of the 30S subunit. In Thermoplasma volcanium (strain ATCC 51530 / DSM 4299 / JCM 9571 / NBRC 15438 / GSS1), this protein is Small ribosomal subunit protein uS8.